We begin with the raw amino-acid sequence, 395 residues long: uncharacterized protein (395 aa).

Disordered stretches follow at residues 1–121 (MLLP…TANS), 136–187 (MRMK…LDRN), 308–335 (QNNE…SKDE), and 365–395 (IQKF…NEGD). A compositionally biased stretch (basic and acidic residues) spans 13–28 (PKGEAKSLVARERKSQ). Residues 64-73 (KSAKLRRKKS) show a composition bias toward basic residues. Basic and acidic residues predominate over residues 97–111 (SIEKKKEEMTSKLPE). Over residues 144–164 (TSRMATKSDSSLETMPESSHN) the composition is skewed to polar residues. Residues 170-179 (KSRKSQRTRG) show a composition bias toward basic residues. Residues 365–377 (IQKFRKKYQKQLK) are compositionally biased toward basic residues. A compositionally biased stretch (basic and acidic residues) spans 378-395 (KSQEEKKDDTKTAKNEGD).

This is an uncharacterized protein from Caenorhabditis elegans.